The chain runs to 1282 residues: Crescerin-like protein che-12 (1282 aa).

TOG regions lie at residues 33 to 240 (DFDT…EHTE) and 268 to 515 (PSLV…MDSF). HEAT repeat units follow at residues 59–96 (QKKG…TFGS), 100–137 (YCMC…LKPE), 162–209 (ELHH…FIGN), 261–300 (RLRF…QITP), 308–345 (PHLH…HLKG), 349–386 (AHIQ…NINP), 388–421 (TVGG…TISP), and 424–461 (FNLQ…LLNG). The tract at residues 566-714 (IQQQGQAEKP…RSFDDRPAKA (149 aa)) is disordered. Low complexity-rich tracts occupy residues 575 to 592 (PSFS…HQAQ) and 633 to 644 (SAASNPNSSTSS). Residues 702-712 (DPPRSFDDRPA) show a composition bias toward basic and acidic residues. TOG regions lie at residues 800 to 1022 (NMSV…ANVE) and 1066 to 1282 (TELL…ALIR). HEAT repeat units follow at residues 838 to 875 (DNLK…NLNS), 879 to 917 (SEME…AATA), 919 to 953 (KALQ…IQGS), 961 to 998 (NALS…DPNF), 1095 to 1132 (ASDT…SMAK), 1177 to 1214 (IEPV…LAYK), and 1219 to 1258 (QVEV…LIGE).

It belongs to the Crescerin family. As to expression, detected in a subset of amphid neurons that lack wing- or finger-like ciliary extensions. Likewise, detected in phasmid neurons.

The protein localises to the cell projection. It localises to the cilium. It is found in the perikaryon. The protein resides in the dendrite. Required for normal structure and function of sensory cilia on amphid neurons, especially for the formation of distal ciliary structures, but is less important for normal assembly of middle and basal ciliary structures. Plays a role in the organization of axoneme microtubule bundles in sensory cilia. Required for normal structure and function of the ASER neuron that mediates attraction to NaCl. Required for normal chemotaxis to NaCl. Required for normal avoidance response to high osmolarity. In contrast, is not required for normal chemotaxis to isoamyl alcohol. Does not play a role in intraflagella transport (IFT). Promotes dauer formation in response to pheromones such as the ascarosides ascr#2, ascr#3, ascr#5, ascr#8 and icas#9. In Caenorhabditis elegans, this protein is Crescerin-like protein che-12.